We begin with the raw amino-acid sequence, 158 residues long: 2-C-methyl-D-erythritol 2,4-cyclodiphosphate synthase (158 aa).

A divalent metal cation is bound by residues Asp9 and His11. 4-CDP-2-C-methyl-D-erythritol 2-phosphate is bound by residues 9-11 (DVH) and 35-36 (HS). Position 43 (His43) interacts with a divalent metal cation. 4-CDP-2-C-methyl-D-erythritol 2-phosphate contacts are provided by residues 57–59 (DIG) and Arg143.

It belongs to the IspF family. Homotrimer. The cofactor is a divalent metal cation.

The catalysed reaction is 4-CDP-2-C-methyl-D-erythritol 2-phosphate = 2-C-methyl-D-erythritol 2,4-cyclic diphosphate + CMP. It participates in isoprenoid biosynthesis; isopentenyl diphosphate biosynthesis via DXP pathway; isopentenyl diphosphate from 1-deoxy-D-xylulose 5-phosphate: step 4/6. In terms of biological role, involved in the biosynthesis of isopentenyl diphosphate (IPP) and dimethylallyl diphosphate (DMAPP), two major building blocks of isoprenoid compounds. Catalyzes the conversion of 4-diphosphocytidyl-2-C-methyl-D-erythritol 2-phosphate (CDP-ME2P) to 2-C-methyl-D-erythritol 2,4-cyclodiphosphate (ME-CPP) with a corresponding release of cytidine 5-monophosphate (CMP). This chain is 2-C-methyl-D-erythritol 2,4-cyclodiphosphate synthase, found in Chromobacterium violaceum (strain ATCC 12472 / DSM 30191 / JCM 1249 / CCUG 213 / NBRC 12614 / NCIMB 9131 / NCTC 9757 / MK).